The following is a 271-amino-acid chain: Phosphonoacetaldehyde hydrolase (271 aa).

Asp12 functions as the Nucleophile in the catalytic mechanism. Mg(2+)-binding residues include Asp12 and Ala14. Catalysis depends on Lys54, which acts as the Schiff-base intermediate with substrate. Asp188 lines the Mg(2+) pocket.

It belongs to the HAD-like hydrolase superfamily. PhnX family. Homodimer. The cofactor is Mg(2+).

The enzyme catalyses phosphonoacetaldehyde + H2O = acetaldehyde + phosphate + H(+). Involved in phosphonate degradation. In Vibrio parahaemolyticus serotype O3:K6 (strain RIMD 2210633), this protein is Phosphonoacetaldehyde hydrolase.